A 300-amino-acid chain; its full sequence is Quinolinate synthase (300 aa).

Histidine 23 and serine 40 together coordinate iminosuccinate. A [4Fe-4S] cluster-binding site is contributed by cysteine 85. Iminosuccinate is bound by residues 111–113 (YIN) and serine 128. Cysteine 171 provides a ligand contact to [4Fe-4S] cluster. Iminosuccinate contacts are provided by residues 198 to 200 (HPE) and threonine 215. Cysteine 258 serves as a coordination point for [4Fe-4S] cluster.

This sequence belongs to the quinolinate synthase family. Type 2 subfamily. [4Fe-4S] cluster is required as a cofactor.

The protein resides in the cytoplasm. The catalysed reaction is iminosuccinate + dihydroxyacetone phosphate = quinolinate + phosphate + 2 H2O + H(+). The protein operates within cofactor biosynthesis; NAD(+) biosynthesis; quinolinate from iminoaspartate: step 1/1. Its function is as follows. Catalyzes the condensation of iminoaspartate with dihydroxyacetone phosphate to form quinolinate. In Clostridium novyi (strain NT), this protein is Quinolinate synthase.